The following is a 217-amino-acid chain: Large ribosomal subunit protein uL3 (217 aa).

Residue glutamine 154 is modified to N5-methylglutamine.

The protein belongs to the universal ribosomal protein uL3 family. Part of the 50S ribosomal subunit. Forms a cluster with proteins L14 and L19. In terms of processing, methylated by PrmB.

One of the primary rRNA binding proteins, it binds directly near the 3'-end of the 23S rRNA, where it nucleates assembly of the 50S subunit. The polypeptide is Large ribosomal subunit protein uL3 (Burkholderia ambifaria (strain ATCC BAA-244 / DSM 16087 / CCUG 44356 / LMG 19182 / AMMD) (Burkholderia cepacia (strain AMMD))).